Here is a 508-residue protein sequence, read N- to C-terminus: UDP-N-acetylmuramoyl-L-alanyl-D-glutamate--L-lysine ligase (508 aa).

Serine 47 contributes to the UDP-N-acetyl-alpha-D-muramoyl-L-alanyl-D-glutamate binding site. ATP is bound at residue 124–130 (GTKGKTT). UDP-N-acetyl-alpha-D-muramoyl-L-alanyl-D-glutamate-binding positions include 168-169 (TT), serine 195, and arginine 203. An N6-carboxylysine modification is found at lysine 237. The L-lysine recognition motif motif lies at 425–428 (DDPA).

It belongs to the MurCDEF family. MurE subfamily. Post-translationally, carboxylation is probably crucial for Mg(2+) binding and, consequently, for the gamma-phosphate positioning of ATP.

The protein localises to the cytoplasm. The catalysed reaction is UDP-N-acetyl-alpha-D-muramoyl-L-alanyl-D-glutamate + L-lysine + ATP = UDP-N-acetyl-alpha-D-muramoyl-L-alanyl-gamma-D-glutamyl-L-lysine + ADP + phosphate + H(+). The protein operates within cell wall biogenesis; peptidoglycan biosynthesis. Catalyzes the addition of L-lysine to the nucleotide precursor UDP-N-acetylmuramoyl-L-alanyl-D-glutamate (UMAG) in the biosynthesis of bacterial cell-wall peptidoglycan. The chain is UDP-N-acetylmuramoyl-L-alanyl-D-glutamate--L-lysine ligase from Enterococcus faecalis (strain ATCC 700802 / V583).